A 149-amino-acid polypeptide reads, in one-letter code: Large ribosomal subunit protein bL9 (149 aa).

This sequence belongs to the bacterial ribosomal protein bL9 family.

Functionally, binds to the 23S rRNA. In Alkaliphilus metalliredigens (strain QYMF), this protein is Large ribosomal subunit protein bL9.